Consider the following 287-residue polypeptide: Seed leukoagglutinin (287 aa).

Positions 1-29 (MATSNSKPTQVLLATFLTFFFLLLNNVNS) are cleaved as a signal peptide. Tyr-74 provides a ligand contact to N-acetyl-alpha-neuraminyl-(2-&gt;3)-beta-D-galactosyl-(1-&gt;4)-beta-D-glucose. A glycan (N-linked (GlcNAc...) (paucimannose) asparagine) is linked at Asn-90. Asp-116, Ser-133, and Lys-136 together coordinate N-acetyl-alpha-neuraminyl-(2-&gt;3)-beta-D-galactosyl-(1-&gt;4)-beta-D-glucose. A glycan (N-linked (GlcNAc...) (paucimannose) asparagine) is linked at Asn-142. Residues Glu-156 and Asp-158 each contribute to the Mn(2+) site. Ca(2+) contacts are provided by Asp-158, Tyr-160, Asp-166, and Asp-169. N-acetyl-alpha-neuraminyl-(2-&gt;3)-beta-D-galactosyl-(1-&gt;4)-beta-D-glucose-binding residues include Tyr-160 and Asp-166. Mn(2+) is bound by residues Asp-169 and His-174. N-linked (GlcNAc...) (high mannose) asparagine; partial glycosylation is present at Asn-208. N-linked (GlcNAc...) (paucimannose) asparagine; partial glycosylation is present at Asn-220. Position 253 (Glu-253) interacts with N-acetyl-alpha-neuraminyl-(2-&gt;3)-beta-D-galactosyl-(1-&gt;4)-beta-D-glucose. The propeptide at 279-287 (NVHIARYTA) is removed in mature form.

The protein belongs to the leguminous lectin family. In terms of assembly, homodimer; disulfide-linked. Dimer of homodimers. In terms of processing, the glycosylation on N-90 is determined to by of the high mannose type in PubMed:26003537, while PubMed:27720757 found a paucimannose at this position. Post-translationally, processed at its C-terminus.

Functionally, sialic acid-binding lectin recognizing oligosaccharides containing terminal sialic acid linked via alpha-2,3 bond to penultimate galactose residues. Binds the trisaccharide sequence Neu5Ac-alpha-2,3-Gal-beta-1,4-GlcNAc. Binds fetuin when fully glycosylated but not when the high mannose-type glycans are removed, although the secondary structure is virtually unaffected by deglycosylation of the high mannose-type glycans. The lectin activity may depend on the presence of a single GlcNAc attached to N-90. The sequence is that of Seed leukoagglutinin from Maackia amurensis (Amur maackia).